Here is a 1028-residue protein sequence, read N- to C-terminus: Contactin-6 (1028 aa).

Residues 1-19 form the signal peptide; that stretch reads MRLLWKLVILLPLINSCAG. 6 Ig-like C2-type domains span residues 32 to 117, 122 to 208, 227 to 308, 318 to 402, 408 to 502, and 500 to 587; these read PQDV…AKLQ, EDFE…RSVQ, PKIE…RNLA, PEWE…AELR, PDFS…RTII, and TIIT…ERLS. 6 cysteine pairs are disulfide-bonded: Cys-50-Cys-100, Cys-144-Cys-196, Cys-249-Cys-297, Cys-339-Cys-386, Cys-431-Cys-479, and Cys-521-Cys-577. Residues Asn-65 and Asn-193 are each glycosylated (N-linked (GlcNAc...) asparagine). Asn-368, Asn-377, and Asn-468 each carry an N-linked (GlcNAc...) asparagine glycan. 4 consecutive Fibronectin type-III domains span residues 600–698, 703–800, 805–901, and 902–996; these read PPED…TKAS, APGN…SGED, APRG…TKKS, and PPSQ…KMSS. Asn-659, Asn-765, Asn-860, and Asn-865 each carry an N-linked (GlcNAc...) asparagine glycan. Tyr-882 carries the post-translational modification Phosphotyrosine. N-linked (GlcNAc...) asparagine glycosylation is found at Asn-895, Asn-931, Asn-956, and Asn-957. Ser-999 carries the GPI-anchor amidated serine lipid modification. Positions 1000-1028 are cleaved as a propeptide — removed in mature form; it reads TGVQISKPSTQSLSMVGVFYCFAIHPLSR.

Belongs to the immunoglobulin superfamily. Contactin family. In terms of assembly, interacts with PTPRG. As to expression, expressed in brain. In brain, it is preferentially expressed in the accessory olfactory bulb, layers II/III and V of the cerebral cortex, piriform cortex, anterior thalamic nuclei, locus coeruleus of the pons and mesencephalic trigeminal nucleus and in Purkinje cells of the cerebellum.

It is found in the cell membrane. Functionally, contactins mediate cell surface interactions during nervous system development. Participates in oligodendrocytes generation by acting as a ligand of NOTCH1. Its association with NOTCH1 promotes NOTCH1 activation through the released notch intracellular domain (NICD) and subsequent translocation to the nucleus. Involved in motor coordination. This is Contactin-6 (Cntn6) from Mus musculus (Mouse).